Consider the following 391-residue polypeptide: UPF0229 protein BCA_0588 (391 aa).

A compositionally biased stretch (polar residues) spans 1 to 16; the sequence is MGEENQPNYTISQENW. 2 disordered regions span residues 1–31 and 80–117; these read MGEE…RHQE and HVGQ…GDAA. Basic and acidic residues predominate over residues 21–31; it reads KGYDDQQRHQE. Gly residues predominate over residues 98–115; the sequence is GSGGQKQKGPGKGQGAGD.

It belongs to the UPF0229 family.

This Bacillus cereus (strain 03BB102) protein is UPF0229 protein BCA_0588.